Here is a 178-residue protein sequence, read N- to C-terminus: Probable chorismate pyruvate-lyase (178 aa).

The substrate site is built by Met37, Arg78, Leu114, and Glu165.

Belongs to the UbiC family.

Its subcellular location is the cytoplasm. The enzyme catalyses chorismate = 4-hydroxybenzoate + pyruvate. The protein operates within cofactor biosynthesis; ubiquinone biosynthesis. Removes the pyruvyl group from chorismate, with concomitant aromatization of the ring, to provide 4-hydroxybenzoate (4HB) for the ubiquinone pathway. The polypeptide is Probable chorismate pyruvate-lyase (Aeromonas salmonicida (strain A449)).